The following is an 866-amino-acid chain: Interleukin-17 receptor A (866 aa).

The first 32 residues, 1–32 (MGAARSPPSAVPGPLLGLLLLLLGVLAPGGAS), serve as a signal peptide directing secretion. Topologically, residues 33-320 (LRLLDHRALV…EPIPDYMPLW (288 aa)) are extracellular. An intrachain disulfide couples C43 to C50. N-linked (GlcNAc...) asparagine glycans are attached at residues N49, N54, and N67. Disulfide bonds link C57/C126 and C185/C196. N-linked (GlcNAc...) asparagine glycans are attached at residues N206, N225, N242, and N265. Cystine bridges form between C245–C276, C277–C303, and C290–C294. Residues 321–341 (VYWFITGISILLVGSVILLIV) traverse the membrane as a helical segment. Over 342 to 866 (CMTWRLAGPG…MGSESEGPSA (525 aa)) the chain is Cytoplasmic. The SEFIR domain maps to 377–534 (PRKVWIIYSA…LMDRFEEVYF (158 aa)). 2 positions are modified to phosphoserine: S708 and S736. Disordered regions lie at residues 717 to 736 (LFLP…PMAS) and 773 to 840 (MVLT…RSLQ). Positions 788–801 (QSVQSDQGYISRSS) are enriched in polar residues. A compositionally biased stretch (acidic residues) spans 809-819 (TEMEEEEEEEQ).

As to quaternary structure, forms heterodimers with IL17RC; the heterodimer binds IL17A and IL17F homodimers as well as the heterodimer formed by IL17A and IL17F. Forms complexes with 2:1 binding stoichiometry: two receptor chains for one interleukin molecule. IL17A homodimer preferentially drives the formation of IL17RA-IL17RC heterodimeric receptor complex, whereas IL17F homodimer forms predominantly complexes with IL17RC homodimer. IL17A homodimer adopts an asymmetrical ternary structure with one IL17RA molecule, allowing for high affinity interactions of one IL17A monomer with one IL17RA molecule (via D1 and D2 domains), while disfavoring binding of a second IL17RA molecule on the other IL17A monomer. IL17A-IL17F forms complexes with IL17RA-IL17RC, but with lower affinity when compared to IL17A homodimer. IL17RA chain cannot distinguish between IL17A and IL17F molecules, potentially enabling the formation of topologically distinct complexes. Interacts with TRAF3IP2. Forms heterodimers with IL17RE; the heterodimer binds IL17C. In terms of assembly, (Microbial infection) Interacts with SARS coronavirus-2/SARS-CoV-2 virus protein ORF8. In terms of processing, glycosylated. Widely expressed.

Its subcellular location is the cell membrane. The protein resides in the secreted. In terms of biological role, receptor for IL17A and IL17F, major effector cytokines of innate and adaptive immune system involved in antimicrobial host defense and maintenance of tissue integrity. Receptor for IL17A. Receptor for IL17F. Binds to IL17A with higher affinity than to IL17F. Binds IL17A and IL17F homodimers as part of a heterodimeric complex with IL17RC. Also binds heterodimers formed by IL17A and IL17F as part of a heterodimeric complex with IL17RC. Cytokine binding triggers homotypic interaction of IL17RA and IL17RC chains with TRAF3IP2 adapter, leading to TRAF6-mediated activation of NF-kappa-B and MAPkinase pathways, ultimately resulting in transcriptional activation of cytokines, chemokines, antimicrobial peptides and matrix metalloproteinases, with potential strong immune inflammation. Involved in antimicrobial host defense primarily promoting neutrophil activation and recruitment at infection sites to destroy extracellular bacteria and fungi. In secondary lymphoid organs, contributes to germinal center formation by regulating the chemotactic response of B cells to CXCL12 and CXCL13, enhancing retention of B cells within the germinal centers, B cell somatic hypermutation rate and selection toward plasma cells. Plays a role in the maintenance of the integrity of epithelial barriers during homeostasis and pathogen infection. Stimulates the production of antimicrobial beta-defensins DEFB1, DEFB103A, and DEFB104A by mucosal epithelial cells, limiting the entry of microbes through the epithelial barriers. Involved in antiviral host defense through various mechanisms. Enhances immunity against West Nile virus by promoting T cell cytotoxicity. Contributes to Influenza virus clearance by driving the differentiation of B-1a B cells, providing for production of virus-specific IgM antibodies at first line of host defense. Receptor for IL17C as part of a heterodimeric complex with IL17RE. Functionally, (Microbial infection) Receptor for SARS coronavirus-2/SARS-CoV-2 virus protein ORF8, leading to IL17 pathway activation and an increased secretion of pro-inflammatory factors through activating NF-kappa-B signaling pathway. In Homo sapiens (Human), this protein is Interleukin-17 receptor A.